The primary structure comprises 461 residues: Ribonuclease inhibitor (461 aa).

S2 is subject to N-acetylserine. The 2 X 5 AA tandem repeats of S-L-D-I-Q stretch occupies residues 2-11 (SLDIQSLDIQ). LRR repeat units lie at residues 20-48 (WAELLPLLQQCQVVRLDDCGLTEARCKDI), 49-76 (SSALRVNPALAELNLRSNELGDVGVHCV), 77-105 (LQGLQTPSCKIQKLSLQNCCLTGAGCGVL), 106-133 (SSTLRTLPTLQELHLSDNLLGDAGLQLL), 134-162 (CEGLLDPQCRLEKLQLEYCSLSAASCEPL), 163-190 (ASVLRAKPDFKELTVSNNDINEAGVRVL), 191-219 (CQGLKDSPCQLEALKLESCGVTSDNCRDL), 220-247 (CGIVASKASLRELALGSNKLGDVGMAEL), 248-276 (CPGLLHPSSRLRTLWIWECGITAKGCGDL), 277-304 (CRVLRAKESLKELSLAGNELGDEGARLL), 305-333 (CETLLEPGCQLESLWVKSCSFTAACCSHF), 334-361 (SSVLAQNRFLLELQISNNRLEDAGVREL), 362-390 (CQGLGQPGSVLRVLWLADCDVSDSSCSSL), 391-418 (AATLLANHSLRELDLSNNCLGDAGILQL), and 419-447 (VESVRQPGCLLEQLVLYDIYWSEEMEDRL). At T82 the chain carries Phosphothreonine. S91 carries the phosphoserine modification.

Forms high-affinity heterodimers with RNASE1, ANG and RNASE2. The N-terminus is blocked. Post-translationally, at least 30 of the 32 cysteine residues are in the reduced form.

It is found in the cytoplasm. The protein localises to the nucleus. In terms of biological role, ribonuclease inhibitor which inhibits RNASE1, RNASE2 and angiogenin (ANG). May play a role in redox homeostasis. Required to inhibit the cytotoxic tRNA ribonuclease activity of ANG in the cytoplasm in absence of stress. Relocates to the nucleus in response to stress, relieving inhibition of ANG in the cytoplasm, and inhibiting the angiogenic activity of ANG in the nucleus. The chain is Ribonuclease inhibitor from Homo sapiens (Human).